A 508-amino-acid chain; its full sequence is Strychnine-11-hydroxylase (508 aa).

Residues 5-25 (MSFLLLFSLCFLIHCFVFLLI) traverse the membrane as a helical segment. Cys445 contacts heme.

This sequence belongs to the cytochrome P450 family. It depends on heme as a cofactor.

Its subcellular location is the membrane. It carries out the reaction beta-colubrine + reduced [NADPH--hemoprotein reductase] + O2 = 11-demethylbrucine + oxidized [NADPH--hemoprotein reductase] + H2O + H(+). It functions in the pathway alkaloid biosynthesis. In terms of biological role, monooxygenase involved in the biosynthesis of curare monoterpene indole alkaloids (MIAs), natural products such as strychnine, a neurotoxic compound used as a pesticide to control rodents, and its pharmacologically active derivatives, including brucine, used to regulate blood pressure. Curare alkaloids act as animal glycine receptor antagonists. Catalyzes the conversion of beta-colubrine to 11-deMe brucine. The chain is Strychnine-11-hydroxylase from Strychnos nux-vomica (Poison nut).